A 97-amino-acid polypeptide reads, in one-letter code: Small ribosomal subunit protein eS25 (97 aa).

Residues 1-24 form a disordered region; it reads MAPAASGAKKQKKKWSKGKVKDKA. The segment covering 9 to 18 has biased composition (basic residues); that stretch reads KKQKKKWSKG.

Belongs to the eukaryotic ribosomal protein eS25 family. As to quaternary structure, component of the small ribosomal subunit (SSU). Mature N.crassa ribosomes consist of a small (40S) and a large (60S) subunit. The 40S small subunit contains 1 molecule of ribosomal RNA (18S rRNA) and at least 32 different proteins. The large 60S subunit contains 3 rRNA molecules (26S, 5.8S and 5S rRNA) and at least 42 different proteins.

The protein localises to the cytoplasm. In terms of biological role, component of the ribosome, a large ribonucleoprotein complex responsible for the synthesis of proteins in the cell. The small ribosomal subunit (SSU) binds messenger RNAs (mRNAs) and translates the encoded message by selecting cognate aminoacyl-transfer RNA (tRNA) molecules. The large subunit (LSU) contains the ribosomal catalytic site termed the peptidyl transferase center (PTC), which catalyzes the formation of peptide bonds, thereby polymerizing the amino acids delivered by tRNAs into a polypeptide chain. The nascent polypeptides leave the ribosome through a tunnel in the LSU and interact with protein factors that function in enzymatic processing, targeting, and the membrane insertion of nascent chains at the exit of the ribosomal tunnel. In Neurospora crassa (strain ATCC 24698 / 74-OR23-1A / CBS 708.71 / DSM 1257 / FGSC 987), this protein is Small ribosomal subunit protein eS25 (rps-25).